Reading from the N-terminus, the 112-residue chain is MAESVASSESLPQMKPEEPESKKSPSREAIPKDMPVVNVRDIMMYVENMEGMENKKLIPYVVYLDEQFKEIVQKRRKDARVVFIFMIAIMSMLVIGLVVCGVKLLGYLMEQK.

Residues 1–11 are compositionally biased toward polar residues; sequence MAESVASSESL. The tract at residues 1-32 is disordered; it reads MAESVASSESLPQMKPEEPESKKSPSREAIPK. Basic and acidic residues predominate over residues 15 to 31; it reads KPEEPESKKSPSREAIP. Residues 81–101 traverse the membrane as a helical segment; that stretch reads VVFIFMIAIMSMLVIGLVVCG.

It localises to the membrane. This is an uncharacterized protein from Encephalitozoon cuniculi (strain GB-M1) (Microsporidian parasite).